The following is a 314-amino-acid chain: Methionyl-tRNA formyltransferase (314 aa).

112–115 (SLLP) provides a ligand contact to (6S)-5,6,7,8-tetrahydrofolate.

It belongs to the Fmt family.

The enzyme catalyses L-methionyl-tRNA(fMet) + (6R)-10-formyltetrahydrofolate = N-formyl-L-methionyl-tRNA(fMet) + (6S)-5,6,7,8-tetrahydrofolate + H(+). Attaches a formyl group to the free amino group of methionyl-tRNA(fMet). The formyl group appears to play a dual role in the initiator identity of N-formylmethionyl-tRNA by promoting its recognition by IF2 and preventing the misappropriation of this tRNA by the elongation apparatus. The chain is Methionyl-tRNA formyltransferase from Aeromonas salmonicida (strain A449).